The sequence spans 481 residues: Ribosomal RNA small subunit methyltransferase F (481 aa).

Residues 125–131, Glu149, Asp176, and Asp194 contribute to the S-adenosyl-L-methionine site; that span reads AAAPGSK. The Nucleophile role is filled by Cys247.

Belongs to the class I-like SAM-binding methyltransferase superfamily. RsmB/NOP family.

Its subcellular location is the cytoplasm. The catalysed reaction is cytidine(1407) in 16S rRNA + S-adenosyl-L-methionine = 5-methylcytidine(1407) in 16S rRNA + S-adenosyl-L-homocysteine + H(+). Functionally, specifically methylates the cytosine at position 1407 (m5C1407) of 16S rRNA. This Psychromonas ingrahamii (strain DSM 17664 / CCUG 51855 / 37) protein is Ribosomal RNA small subunit methyltransferase F.